Reading from the N-terminus, the 387-residue chain is SLC2A4 regulator (387 aa).

Disordered regions lie at residues 1 to 97 (MERP…RATP) and 139 to 179 (EALV…PPEA). The span at 27–36 (GPGPRAAPVT) shows a compositional bias: low complexity. The C2H2-type zinc finger occupies 200-225 (FQCLWKSCGKVLSTASAMQRHIRLVH). The Nuclear export signal signature appears at 253 to 263 (LTDGLSSLTPV). 2 positions are modified to phosphoserine: Ser-264 and Ser-268. The segment at 283-305 (EPPALPSPLRPPAPPLPPPPVLS) is disordered. A compositionally biased stretch (pro residues) spans 285 to 303 (PALPSPLRPPAPPLPPPPV). The Nuclear localization signal signature appears at 351-354 (RKPR).

Interacts with MEF2A. As to expression, according to PubMed:14630949, expressed in heart, skeletal muscle, liver, kidney and pancreas; undetectable in lung, placenta or brain. According to PubMed:14625278, ubiquitously expressed, with lowest expression in brain and ileum.

It localises to the cytoplasm. The protein resides in the nucleus. Transcription factor involved in SLC2A4 and HD gene transactivation. Binds to the consensus sequence 5'-GCCGGCG-3'. The chain is SLC2A4 regulator (SLC2A4RG) from Homo sapiens (Human).